The following is a 336-amino-acid chain: Glycerol-3-phosphate dehydrogenase [NAD(P)+] (336 aa).

NADPH contacts are provided by S16, Y17, H37, and K111. Sn-glycerol 3-phosphate contacts are provided by K111, G140, and T142. A144 serves as a coordination point for NADPH. Sn-glycerol 3-phosphate-binding residues include K196, D249, S259, R260, and N261. The active-site Proton acceptor is the K196. Residue R260 participates in NADPH binding. Residues V284 and E286 each contribute to the NADPH site.

Belongs to the NAD-dependent glycerol-3-phosphate dehydrogenase family.

Its subcellular location is the cytoplasm. The catalysed reaction is sn-glycerol 3-phosphate + NAD(+) = dihydroxyacetone phosphate + NADH + H(+). It catalyses the reaction sn-glycerol 3-phosphate + NADP(+) = dihydroxyacetone phosphate + NADPH + H(+). Its pathway is membrane lipid metabolism; glycerophospholipid metabolism. Its function is as follows. Catalyzes the reduction of the glycolytic intermediate dihydroxyacetone phosphate (DHAP) to sn-glycerol 3-phosphate (G3P), the key precursor for phospholipid synthesis. The sequence is that of Glycerol-3-phosphate dehydrogenase [NAD(P)+] from Actinobacillus pleuropneumoniae serotype 5b (strain L20).